The following is a 275-amino-acid chain: Chemotaxis protein methyltransferase 1 (275 aa).

The CheR-type methyltransferase domain maps to Met1–Lys275. S-adenosyl-L-methionine is bound by residues Asn76, Thr78, Arg82, Glu117, Asp145, Asn201–Leu202, and Arg218–Asn219.

The catalysed reaction is L-glutamyl-[protein] + S-adenosyl-L-methionine = [protein]-L-glutamate 5-O-methyl ester + S-adenosyl-L-homocysteine. Its function is as follows. Methylation of the membrane-bound methyl-accepting chemotaxis proteins (MCP) to form gamma-glutamyl methyl ester residues in MCP. This is Chemotaxis protein methyltransferase 1 (cheR1) from Vibrio cholerae serotype O1 (strain ATCC 39315 / El Tor Inaba N16961).